Reading from the N-terminus, the 200-residue chain is SKP1-like protein 19 (200 aa).

A compositionally biased stretch (basic and acidic residues) spans 67–92 (DDVVETHESSTKGDKTVEEAKKKPDD). Residues 67–109 (DDVVETHESSTKGDKTVEEAKKKPDDVAVPESTEGDDEAEDKK) form a disordered region. Residues 132 to 190 (ILAANYLNVQGLFDLCSKTIADYIKDMTPEEVRELFNIENDFTPEEEEAIRNENAWTFE) are interaction with the F-box domain of F-box proteins.

The protein belongs to the SKP1 family. As to quaternary structure, part of a SCF (SKP1-cullin-F-box) protein ligase complex. Interacts with CPR1/CPR30. Expressed in leaves and flowers.

Its subcellular location is the nucleus. The protein operates within protein modification; protein ubiquitination. In terms of biological role, involved in ubiquitination and subsequent proteasomal degradation of target proteins. Together with CUL1, RBX1 and a F-box protein, it forms a SCF E3 ubiquitin ligase complex. The functional specificity of this complex depends on the type of F-box protein. In the SCF complex, it serves as an adapter that links the F-box protein to CUL1. The protein is SKP1-like protein 19 (ASK19) of Arabidopsis thaliana (Mouse-ear cress).